The primary structure comprises 140 residues: Large ribosomal subunit protein uL11 (140 aa).

Belongs to the universal ribosomal protein uL11 family. In terms of assembly, part of the ribosomal stalk of the 50S ribosomal subunit. Interacts with L10 and the large rRNA to form the base of the stalk. L10 forms an elongated spine to which L12 dimers bind in a sequential fashion forming a multimeric L10(L12)X complex. One or more lysine residues are methylated.

Forms part of the ribosomal stalk which helps the ribosome interact with GTP-bound translation factors. This Caldanaerobacter subterraneus subsp. tengcongensis (strain DSM 15242 / JCM 11007 / NBRC 100824 / MB4) (Thermoanaerobacter tengcongensis) protein is Large ribosomal subunit protein uL11.